The chain runs to 278 residues: Serine protease 57 (278 aa).

The signal sequence occupies residues Met1–Gly31. The region spanning Ile34–Arg263 is the Peptidase S1 domain. A disulfide bond links Cys59 and Cys75. Catalysis depends on charge relay system residues His74 and Asp122. Asn129 carries an N-linked (GlcNAc...) asparagine glycan. Intrachain disulfides connect Cys157–Cys224, Cys188–Cys202, and Cys214–Cys239. The active-site Charge relay system is the Ser218.

The protein belongs to the peptidase S1 family. In terms of processing, after cleavage of the signal peptide, the N-terminus is probably further processed by CTSC. Processing by CTSC is probably required for accumulation in cytoplasmic granules; in the absence of CTSC the protein does not accumulate. Post-translationally, N-glycosylated.

The protein resides in the cytoplasmic granule lumen. It localises to the secreted. Functionally, serine protease that cleaves preferentially after Arg residues. Can also cleave after citrulline (deimidated arginine) and methylarginine residues. The chain is Serine protease 57 (Prss57) from Rattus norvegicus (Rat).